The primary structure comprises 507 residues: ATP synthase subunit alpha, chloroplastic (507 aa).

170–177 (GDRQTGKT) contributes to the ATP binding site.

The protein belongs to the ATPase alpha/beta chains family. In terms of assembly, F-type ATPases have 2 components, CF(1) - the catalytic core - and CF(0) - the membrane proton channel. CF(1) has five subunits: alpha(3), beta(3), gamma(1), delta(1), epsilon(1). CF(0) has four main subunits: a, b, b' and c.

The protein localises to the plastid. The protein resides in the chloroplast thylakoid membrane. It catalyses the reaction ATP + H2O + 4 H(+)(in) = ADP + phosphate + 5 H(+)(out). In terms of biological role, produces ATP from ADP in the presence of a proton gradient across the membrane. The alpha chain is a regulatory subunit. In Gossypium barbadense (Sea Island cotton), this protein is ATP synthase subunit alpha, chloroplastic.